A 56-amino-acid chain; its full sequence is Large ribosomal subunit protein bL32 (56 aa).

The disordered stretch occupies residues 1 to 26 (MAVQQNKKSRSKRGMRRSHDALSTAQ). Residues 7–16 (KKSRSKRGMR) show a composition bias toward basic residues.

This sequence belongs to the bacterial ribosomal protein bL32 family.

The protein is Large ribosomal subunit protein bL32 of Shewanella baltica (strain OS155 / ATCC BAA-1091).